Reading from the N-terminus, the 485-residue chain is N-succinylglutamate 5-semialdehyde dehydrogenase (485 aa).

NAD(+) is bound at residue 220–225 (GSANTG). Catalysis depends on residues Glu-243 and Cys-278.

This sequence belongs to the aldehyde dehydrogenase family. AstD subfamily.

The catalysed reaction is N-succinyl-L-glutamate 5-semialdehyde + NAD(+) + H2O = N-succinyl-L-glutamate + NADH + 2 H(+). It functions in the pathway amino-acid degradation; L-arginine degradation via AST pathway; L-glutamate and succinate from L-arginine: step 4/5. Catalyzes the NAD-dependent reduction of succinylglutamate semialdehyde into succinylglutamate. This chain is N-succinylglutamate 5-semialdehyde dehydrogenase, found in Vibrio atlanticus (strain LGP32) (Vibrio splendidus (strain Mel32)).